The primary structure comprises 130 residues: Protein ApaG (130 aa).

An ApaG domain is found at 3–127 (EHESCGVRIS…FSLDRPSDRL (125 aa)).

This Maricaulis maris (strain MCS10) (Caulobacter maris) protein is Protein ApaG.